The chain runs to 466 residues: F-box only protein 15 (466 aa).

The F-box domain maps to 27–73 (SASLDSLPSEVLLKILSYLDAAALLCAGCVNRRFYHLANDNFIWIRI).

Directly interacts with SKP1 and CUL1.

Its function is as follows. Substrate-recognition component of the SCF (SKP1-CUL1-F-box protein)-type E3 ubiquitin ligase complex. This Bos taurus (Bovine) protein is F-box only protein 15 (FBXO15).